The primary structure comprises 187 residues: Dynein regulatory complex protein 12 (187 aa).

Positions 1–23 are disordered; the sequence is MSKKSGKGKGKNDGDELGAEKEQ. Positions 10-23 are enriched in basic and acidic residues; sequence GKNDGDELGAEKEQ.

This sequence belongs to the DRC12 family. Component of the nexin-dynein regulatory complex (N-DRC).

The protein resides in the cytoplasm. Its subcellular location is the cytoskeleton. It localises to the flagellum axoneme. Its function is as follows. Component of the nexin-dynein regulatory complex (N-DRC), a key regulator of ciliary/flagellar motility which maintains the alignment and integrity of the distal axoneme and regulates microtubule sliding in motile axonemes. The sequence is that of Dynein regulatory complex protein 12 (DRC12) from Tetrahymena thermophila (strain SB210).